A 513-amino-acid polypeptide reads, in one-letter code: Xylose import ATP-binding protein XylG (513 aa).

ABC transporter domains lie at 5–242 (LEMK…VGRE) and 259–505 (LRIE…LRSE). Residue 37 to 44 (GENGSGKS) participates in ATP binding.

The protein belongs to the ABC transporter superfamily. Xylose importer (TC 3.A.1.2.4) family. In terms of assembly, the complex is composed of two ATP-binding proteins (XylG), two transmembrane proteins (XylH) and a solute-binding protein (XylF).

The protein localises to the cell inner membrane. The catalysed reaction is D-xylose(out) + ATP + H2O = D-xylose(in) + ADP + phosphate + H(+). Its function is as follows. Part of the ABC transporter complex XylFGH involved in xylose import. Responsible for energy coupling to the transport system. The chain is Xylose import ATP-binding protein XylG from Escherichia coli (strain UTI89 / UPEC).